The sequence spans 241 residues: Small ribosomal subunit protein uS2 (241 aa).

It belongs to the universal ribosomal protein uS2 family.

This chain is Small ribosomal subunit protein uS2, found in Sodalis glossinidius (strain morsitans).